A 302-amino-acid chain; its full sequence is Tyrosine--tRNA ligase 2 (302 aa).

Y33 provides a ligand contact to L-tyrosine. The 'HIGH' region motif lies at 38 to 47 (PTADSLHLGH). Residues Y160 and Q164 each contribute to the L-tyrosine site. A 'KMSKS' region motif is present at residues 220 to 224 (KFGKS). ATP is bound at residue K223.

This sequence belongs to the class-I aminoacyl-tRNA synthetase family. TyrS type 1 subfamily. Homodimer.

It is found in the cytoplasm. It carries out the reaction tRNA(Tyr) + L-tyrosine + ATP = L-tyrosyl-tRNA(Tyr) + AMP + diphosphate + H(+). Functionally, catalyzes the attachment of tyrosine to tRNA(Tyr) in a two-step reaction: tyrosine is first activated by ATP to form Tyr-AMP and then transferred to the acceptor end of tRNA(Tyr). This is Tyrosine--tRNA ligase 2 (tyrS2) from Streptococcus thermophilus (strain CNRZ 1066).